We begin with the raw amino-acid sequence, 386 residues long: Probable pectin lyase E (386 aa).

The first 16 residues, 1–16, serve as a signal peptide directing secretion; that stretch reads MKTAVLSLFLALQTYA. Cysteine 77 and cysteine 101 are disulfide-bonded. An N-linked (GlcNAc...) asparagine glycan is attached at asparagine 124. Arginine 251 is a catalytic residue. Cysteines 326 and 334 form a disulfide.

It belongs to the polysaccharide lyase 1 family.

It localises to the secreted. The catalysed reaction is Eliminative cleavage of (1-&gt;4)-alpha-D-galacturonan methyl ester to give oligosaccharides with 4-deoxy-6-O-methyl-alpha-D-galact-4-enuronosyl groups at their non-reducing ends.. Pectinolytic enzymes consist of four classes of enzymes: pectin lyase, polygalacturonase, pectin methylesterase and rhamnogalacturonase. Among pectinolytic enzymes, pectin lyase is the most important in depolymerization of pectin, since it cleaves internal glycosidic bonds of highly methylated pectins. The protein is Probable pectin lyase E (pelE) of Aspergillus fumigatus (strain CBS 144.89 / FGSC A1163 / CEA10) (Neosartorya fumigata).